The chain runs to 610 residues: tRNA uridine 5-carboxymethylaminomethyl modification enzyme MnmG (610 aa).

14–19 (GAGHAG) lines the FAD pocket. 274–288 (GPRYCPSIEDKIVKF) is an NAD(+) binding site.

It belongs to the MnmG family. As to quaternary structure, homodimer. Heterotetramer of two MnmE and two MnmG subunits. FAD serves as cofactor.

The protein resides in the cytoplasm. Its function is as follows. NAD-binding protein involved in the addition of a carboxymethylaminomethyl (cmnm) group at the wobble position (U34) of certain tRNAs, forming tRNA-cmnm(5)s(2)U34. The chain is tRNA uridine 5-carboxymethylaminomethyl modification enzyme MnmG from Chlamydia trachomatis serovar A (strain ATCC VR-571B / DSM 19440 / HAR-13).